A 7182-amino-acid polypeptide reads, in one-letter code: Replicase polyprotein 1ab (7182 aa).

The CoV Nsp1 globular domain maps to 25 to 151; the sequence is RTDHVSLKAS…EFQFLLRKKG (127 aa). The region spanning 159 to 195 is the BetaCoV Nsp1 C-terminal domain; it reads DAPWDYNWTPYSDLMDALEADPCGKYSQSLLKKLVGG. Residues 197–473 enclose the CoV Nsp2 N-terminal domain; it reads FTPIDQYMCG…WSKVCETANL (277 aa). Zn(2+) contacts are provided by C340, C343, C359, and C361. The C4 stretch occupies residues 340 to 361; that stretch reads CTSCGKGSWLTGNAVQGFACDC. The CoV Nsp2 middle domain occupies 479–713; sequence QHAINFVNEF…MHILSKAMQL (235 aa). The CoV Nsp2 C-terminal domain occupies 715–851; the sequence is HTTVSWAGSK…VPTLFRLKGG (137 aa). Residues 855–964 enclose the Ubiquitin-like 1 domain; it reads KGVKFGGEQT…MTFSVNPVEE (110 aa). Macro domains lie at 1186-1345 and 1354-1480; these read PLKN…KVYN and TGLT…AVQT. Residues 1480–1553 form the DPUP domain; sequence TPEQSFINTV…LEKCRTYLTS (74 aa). The region spanning 1558–1613 is the Ubiquitin-like 2 domain; that stretch reads QKNVDVLVTIDGVNFRTVVLNNTTTYRVQLGSVFYKGSDISDTIPTEKMSGEAVYL. Residues 1628–1902 form the Peptidase C16 domain; that stretch reads VYGTADTAFL…WADVDPDLSA (275 aa). C1668 functions as the For PL-PRO activity in the catalytic mechanism. Residues C1748, C1751, C1783, and C1785 each coordinate Zn(2+). The segment at 1748 to 1785 adopts a C4-type zinc-finger fold; it reads CNVCGVQDTTTTGLKACIYVGMNSLDELHATHEECCQC. Catalysis depends on for PL-PRO activity residues H1838 and D1853. Residues 1916–2033 enclose the Nucleic acid-binding domain; sequence VIEYSPATIL…QVYDIAPVTL (118 aa). The region spanning 2059–2179 is the G2M domain; it reads PQSPVQVAED…ASVTVNVTTA (121 aa). 3 helical membrane-spanning segments follow: residues 2158-2178, 2196-2216, and 2268-2288; these read ILLG…NVTT, GIIG…FTFW, and LLFL…LFLF. The interval 2158 to 2441 is HD1; it reads ILLGASSLFA…VTHIPLLGLV (284 aa). The region spanning 2305–2371 is the 3Ecto domain; sequence LATYRELRSY…FQMIQTHVTS (67 aa). 2 cysteine pairs are disulfide-bonded: C2321-C2349 and C2339-C2346. 3 helical membrane passes run 2372 to 2392, 2396 to 2416, and 2421 to 2441; these read YVIN…YVLY, FNVL…GAFV, and YNYL…LGLV. The Y1 stretch occupies residues 2455–2545; the sequence is RFYNHVINGC…SLRRLVKPTD (91 aa). One can recognise a CoV Nsp3 Y domain in the interval 2455–2828; sequence RFYNHVINGC…LSVKFSATKL (374 aa). Zn(2+)-binding residues include H2459, C2464, C2469, C2472, C2505, H2508, C2512, and C2515. The tract at residues 2459–2472 is ZF1; that stretch reads HVINGCKDTACLLC. A ZF2 region spans residues 2505–2515; the sequence is CCRHNWNCVDC. The tract at residues 2546–2644 is Y2; that stretch reads KSHYYVESVT…LVDSNMVTTV (99 aa). The interval 2546–2828 is coV-Y; the sequence is KSHYYVESVT…LSVKFSATKL (283 aa). The Y3 stretch occupies residues 2645–2727; it reads GDSREIASKM…DALQYAYKHD (83 aa). Residues 2728–2828 are Y4; it reads LQLTTEGFNN…LSVKFSATKL (101 aa). Transmembrane regions (helical) follow at residues 2848 to 2868, 3119 to 3139, 3152 to 3172, and 3203 to 3223; these read CVVT…LPAF, STSL…FYYV, CAVV…FVVS, and WFVM…IVGV. An HD2 region spans residues 2848 to 3223; sequence CVVTLVVFAM…WMVFAYIVGV (376 aa). One can recognise a Nsp4C domain in the interval 3242-3338; it reads VFTDGKLNCS…NCSVTSSVLQ (97 aa). A Peptidase C30 domain is found at 3339–3644; sequence SGLVKMAAPS…NMQVMGVVMQ (306 aa). Residues H3379 and C3486 each act as for 3CL-PRO activity in the active site. Helical transmembrane passes span 3650–3670, 3684–3704, 3709–3729, 3760–3777, 3782–3802, 3823–3843, and 3855–3875; these read ISYG…VATL, VIPL…MLTV, TFLT…NIVY, LGVY…VRRL, ASNL…YTTG, VTVF…FLYA, and LVLL…GVFS. The HD3 stretch occupies residues 3650–3875; sequence ISYGLVHWLF…FCTVYFGVFS (226 aa). Residues 3937–4019 enclose the RdRp Nsp7 cofactor domain; sequence SKLTDLKCTS…DLLDHPSVLQ (83 aa). The region spanning 4020–4218 is the RdRp Nsp8 cofactor domain; sequence ATLSEFSHLA…RAASSAVTLQ (199 aa). The 110-residue stretch at 4219–4328 folds into the Nsp9 ssRNA-binding domain; the sequence is NNEIRPSGLK…GHIAATVRLQ (110 aa). The region spanning 4329 to 4467 is the ExoN/MTase coactivator domain; that stretch reads AGSNTEFAIN…DALRGTTIPQ (139 aa). Zn(2+) is bound by residues C4402, C4405, H4411, C4418, C4444, C4447, C4455, and C4457. 2 zinc fingers span residues 4402–4418 and 4444–4457; these read CLYC…TGVC and CNVC…GCNC. One can recognise a NiRAN domain in the interval 4473–4730; the sequence is FLNRVRGSIV…AAETHRDCDL (258 aa). N4678 and D4687 together coordinate Mn(2+). Residues 4735–4833 form the Nsp12 Interface domain; it reads IEWPLLEYDY…MNMDVSLHRH (99 aa). Zn(2+)-binding residues include H4764, C4770, C4775, C4779, and C4956. The region spanning 4834-5401 is the Nsp12 RNA-dependent RNA polymerase domain; the sequence is RLSLKELMMY…DLYTAPTTLQ (568 aa). The segment at 4836 to 5050 is rdRp Fingers N-ter; the sequence is SLKELMMYAA…HQKMLKSMAA (215 aa). The interval 5051–5089 is rdRp Palm N-ter; that stretch reads TRGSTCVIGTTKFYGGWDFMLKTLYKDVDNPHLMGWDYP. Residues 5081–5243 enclose the RdRp catalytic domain; that stretch reads PHLMGWDYPK…CYNSDYATKG (163 aa). The tract at residues 5090 to 5148 is rdRp Fingers C-ter; that stretch reads KCDRAMPNMCRIFASLILARKHSTCCTNTDRFYRLANECAQVLSEYVLCGGGYYVKPGG. H5111, C5114, and C5115 together coordinate Zn(2+). Residues 5149–5284 are rdRp Palm C-ter; it reads TSSGDATTAY…KKGPHEFCSQ (136 aa). Catalysis depends on residues S5228, D5229, and D5230. Residues 5285 to 5401 form a rdRp Thumb region; it reads HTLFIKDGDD…DLYTAPTTLQ (117 aa). One can recognise a CV ZBD domain in the interval 5402 to 5514; sequence AVGSCVVCHS…TEFNRLATCD (113 aa). Zn(2+) is bound by residues C5406, C5409, C5417, C5420, C5427, C5430, H5434, H5440, C5451, C5456, C5473, and H5476. The 182-residue stretch at 5658 to 5839 folds into the (+)RNA virus helicase ATP-binding domain; that stretch reads TVPEEFANHV…MCNLGPDIFL (182 aa). Residue 5683–5690 participates in ATP binding; sequence GPPGTGKS. The (+)RNA virus helicase C-terminal domain maps to 5840-6014; sequence SVCYRCPEEI…GLYKDCSRES (175 aa). An ExoN domain is found at 6071–6286; that stretch reads LFITRDEAIR…RCLAIHDCFI (216 aa). Residues D6089, E6091, and E6190 contribute to the active site. Zn(2+)-binding residues include C6206, C6209, C6225, H6228, H6256, C6260, and H6263. Residues H6267 and D6272 contribute to the active site. Residue C6278 participates in Zn(2+) binding. An N7-MTase domain is found at 6295–6523; that stretch reads YPYISHEKRL…NLWSTFTKIQ (229 aa). 6330–6336 contributes to the S-adenosyl-L-methionine binding site; the sequence is DIGNPKG. Residues 6409–6423 form a gpppA-binding region; sequence CDGGSLYVNKHAFHT. Zn(2+) is bound by residues C6447, C6469, C6480, and H6483. Residues 6524 to 6584 form the Nsp15 N-terminal oligomerization domain; that stretch reads GLENIAYNVI…NIAFELYAKR (61 aa). One can recognise an AV-Nsp11N/CoV-Nsp15M domain in the interval 6585–6715; the sequence is AVRSHPDFNL…IYKKVNNEFV (131 aa). The NendoU domain occupies 6732–6871; it reads TPVSEMEKDF…KDGQVQTFYP (140 aa). Active-site residues include H6762, H6777, K6817, K6920, D7004, K7044, and E7077. A Nidovirus-type SAM-dependent 2'-O-MTase domain is found at 6876 to 7170; the sequence is INDWKPGLAM…TLSVSTDVLV (295 aa).

This sequence belongs to the coronaviruses polyprotein 1ab family. Interacts with host PHB and PHB2. As to quaternary structure, interacts with papain-like protease nsp3 and non-structural protein 6. In terms of assembly, monomer. Homodimer. Only the homodimer shows catalytic activity. Interacts with nsp8 and nsp12 to form the replication-transcription complex (RTC): nsp12, nsp7, two subunits of nsp8, and up to two subunits of nsp13. As to quaternary structure, interacts with nsp7, nsp13 and nsp12 to form the replication-transcription complex (RTC): nsp12, nsp7, two subunits of nsp8, and up to two subunits of nsp13. In terms of assembly, interacts with nsp12. Interacts with proofreading exoribonuclease nsp14 and 2'-O-methyltransferase nsp16; these interactions enhance nsp14 and nsp16 enzymatic activities. As to quaternary structure, interacts with nsp7 and nsp8 to form the replication-transcription complex (RTC): nsp12, nsp7, two subunits of nsp8, and up to two subunits of nsp13. Interacts with nsp9. In terms of assembly, interacts with nsp8 to form the replication-transcription complex (RTC): nsp12, nsp7, two subunits of nsp8, and up to two subunits of nsp13. The cofactor is Mn(2+). Mg(2+) is required as a cofactor. Post-translationally, specific enzymatic cleavages in vivo by its own proteases yield mature proteins. 3CL-PRO and PL-PRO proteinases are autocatalytically processed.

The protein resides in the host membrane. It localises to the host cytoplasm. The protein localises to the host perinuclear region. Its subcellular location is the host endoplasmic reticulum-Golgi intermediate compartment. The catalysed reaction is RNA(n) + a ribonucleoside 5'-triphosphate = RNA(n+1) + diphosphate. It carries out the reaction ATP + H2O = ADP + phosphate + H(+). The enzyme catalyses Thiol-dependent hydrolysis of ester, thioester, amide, peptide and isopeptide bonds formed by the C-terminal Gly of ubiquitin (a 76-residue protein attached to proteins as an intracellular targeting signal).. It catalyses the reaction a 5'-end (N(7)-methyl 5'-triphosphoguanosine)-ribonucleoside in mRNA + S-adenosyl-L-methionine = a 5'-end (N(7)-methyl 5'-triphosphoguanosine)-(2'-O-methyl-ribonucleoside) in mRNA + S-adenosyl-L-homocysteine + H(+). The catalysed reaction is uridylyl-uridylyl-ribonucleotide-RNA = a 3'-end uridylyl-2',3'-cyclophospho-uridine-RNA + a 5'-end dephospho-ribonucleoside-RNA. It carries out the reaction a 5'-end diphospho-ribonucleoside in mRNA + GTP + H(+) = a 5'-end (5'-triphosphoguanosine)-ribonucleoside in mRNA + diphosphate. The enzyme catalyses a 5'-end (5'-triphosphoguanosine)-ribonucleoside in mRNA + S-adenosyl-L-methionine = a 5'-end (N(7)-methyl 5'-triphosphoguanosine)-ribonucleoside in mRNA + S-adenosyl-L-homocysteine. Functionally, the replicase polyprotein of coronaviruses is a multifunctional protein: it contains the activities necessary for the transcription of negative stranded RNA, leader RNA, subgenomic mRNAs and progeny virion RNA as well as proteinases responsible for the cleavage of the polyprotein into functional products. In terms of biological role, inhibits host translation by interacting with the 40S ribosomal subunit. The nsp1-40S ribosome complex further induces an endonucleolytic cleavage near the 5'UTR of host mRNAs, targeting them for degradation. Viral mRNAs are not susceptible to nsp1-mediated endonucleolytic RNA cleavage thanks to the presence of a 5'-end leader sequence and are therefore protected from degradation. By suppressing host gene expression, nsp1 facilitates efficient viral gene expression in infected cells and evasion from host immune response. Its function is as follows. May play a role in the modulation of host cell survival signaling pathway by interacting with host PHB and PHB2. Indeed, these two proteins play a role in maintaining the functional integrity of the mitochondria and protecting cells from various stresses. Responsible for the cleavages located at the N-terminus of the replicase polyprotein. In addition, PL-PRO possesses a deubiquitinating/deISGylating activity and processes both 'Lys-48'- and 'Lys-63'-linked polyubiquitin chains from cellular substrates. Participates together with nsp4 in the assembly of virally-induced cytoplasmic double-membrane vesicles necessary for viral replication. Antagonizes innate immune induction of type I interferon by blocking the phosphorylation, dimerization and subsequent nuclear translocation of host IRF3. Also prevents host NF-kappa-B signaling. Functionally, participates in the assembly of virally-induced cytoplasmic double-membrane vesicles necessary for viral replication. In terms of biological role, cleaves the C-terminus of replicase polyprotein at 11 sites. Recognizes substrates containing the core sequence [ILMVF]-Q-|-[SGACN]. Also able to bind an ADP-ribose-1''-phosphate (ADRP). Its function is as follows. Plays a role in the initial induction of autophagosomes from host endoplasmic reticulum. Later, limits the expansion of these phagosomes that are no longer able to deliver viral components to lysosomes. Forms a hexadecamer with nsp8 (8 subunits of each) that may participate in viral replication by acting as a primase. Alternatively, may synthesize substantially longer products than oligonucleotide primers. Functionally, forms a hexadecamer with nsp7 (8 subunits of each) that may participate in viral replication by acting as a primase. Alternatively, may synthesize substantially longer products than oligonucleotide primers. In terms of biological role, forms a primer, NSP9-pU, which is utilized by the polymerase for the initiation of RNA chains. Interacts with ribosome signal recognition particle RNA (SRP). Together with NSP8, suppress protein integration into the cell membrane, thereby disrupting host immune defenses. Its function is as follows. Plays a pivotal role in viral transcription by stimulating both nsp14 3'-5' exoribonuclease and nsp16 2'-O-methyltransferase activities. Therefore plays an essential role in viral mRNAs cap methylation. RNA-directed RNA polymerase that catalyzes the transcription of viral genomic and subgenomic RNAs. Acts in complex with nsp7 and nsp8 to transcribe both the minus and positive strands of genomic RNA. The kinase-like NiRAN domain of NSP12 attaches one or more nucleotides to the amino terminus of NSP9, forming a covalent RNA-protein intermediate that serves as transcription/replication primer. Subgenomic RNAs (sgRNAs) are formed by discontinuous transcription: The polymerase has the ability to pause at transcription-regulating sequences (TRS) and jump to the leader TRS, resulting in a major deletion. This creates a series of subgenomic RNAs that are replicated, transcribed and translated. In addition, Nsp12 is a subunit of the viral RNA capping enzyme that catalyzes the RNA guanylyltransferase reaction for genomic and sub-genomic RNAs. Subsequently, the NiRAN domain transfers RNA to GDP, and forms the core cap structure GpppA-RNA. Functionally, multi-functional protein with a zinc-binding domain in N-terminus displaying RNA and DNA duplex-unwinding activities with 5' to 3' polarity. Activity of helicase is dependent on magnesium. In terms of biological role, plays a role in viral RNA synthesis through two distinct activities. The N7-guanine methyltransferase activity plays a role in the formation of the cap structure GpppA-RNA. The proofreading exoribonuclease reduces the sensitivity of the virus to RNA mutagens during replication. This activity acts on both ssRNA and dsRNA in a 3'-5' direction. Its function is as follows. Plays a role in viral transcription/replication and prevents the simultaneous activation of host cell dsRNA sensors, such as MDA5/IFIH1, OAS, and PKR. Acts by degrading the 5'-polyuridines generated during replication of the poly(A) region of viral genomic and subgenomic RNAs. Catalyzes a two-step reaction in which a 2'3'-cyclic phosphate (2'3'-cP) is first generated by 2'-O transesterification, which is then hydrolyzed to a 3'-phosphate (3'-P). If not degraded, poly(U) RNA would hybridize with poly(A) RNA tails and activate host dsRNA sensors. Methyltransferase that mediates mRNA cap 2'-O-ribose methylation to the 5'-cap structure of viral mRNAs. N7-methyl guanosine cap is a prerequisite for binding of nsp16. Therefore plays an essential role in viral mRNAs cap methylation which is essential to evade immune system. The chain is Replicase polyprotein 1ab (rep) from Pipistrellus abramus (Japanese pipistrelle).